The chain runs to 309 residues: Ferrochelatase (309 aa).

Fe cation-binding residues include H185 and E262.

It belongs to the ferrochelatase family.

Its subcellular location is the cytoplasm. It catalyses the reaction heme b + 2 H(+) = protoporphyrin IX + Fe(2+). The protein operates within porphyrin-containing compound metabolism; protoheme biosynthesis; protoheme from protoporphyrin-IX: step 1/1. Functionally, catalyzes the ferrous insertion into protoporphyrin IX. The chain is Ferrochelatase from Campylobacter jejuni subsp. jejuni serotype O:23/36 (strain 81-176).